The sequence spans 151 residues: MNKTTRVMPAHKHIALVAHDNYKPELLRWVKENKDALQGHFLYATGTTGRILSKETGLAIKSLLSGPMGGDQQLGALISEGKIDMMIFFWDPLNAVPHDPDVKALLRIATVWNVPVAMNRASAKFMISAPQMEEEVSIEIPDYDAYLAERV.

The region spanning 6-151 is the MGS-like domain; sequence RVMPAHKHIA…DYDAYLAERV (146 aa). Substrate-binding positions include His19, Lys23, 45–48, and 65–66; these read TGTT and SG. Asp71 (proton donor/acceptor) is an active-site residue. Substrate is bound at residue His98.

The protein belongs to the methylglyoxal synthase family.

The enzyme catalyses dihydroxyacetone phosphate = methylglyoxal + phosphate. In terms of biological role, catalyzes the formation of methylglyoxal from dihydroxyacetone phosphate. This chain is Methylglyoxal synthase, found in Aliivibrio fischeri (strain ATCC 700601 / ES114) (Vibrio fischeri).